The chain runs to 180 residues: Endoribonuclease YbeY (180 aa).

H118, H122, and H128 together coordinate Zn(2+).

The protein belongs to the endoribonuclease YbeY family. Zn(2+) serves as cofactor.

The protein localises to the cytoplasm. In terms of biological role, single strand-specific metallo-endoribonuclease involved in late-stage 70S ribosome quality control and in maturation of the 3' terminus of the 16S rRNA. The sequence is that of Endoribonuclease YbeY from Rhodococcus opacus (strain B4).